A 232-amino-acid chain; its full sequence is E3 ubiquitin-protein ligase RNF125 (232 aa).

The segment covering methionine 1–glycine 10 has biased composition (polar residues). Residues methionine 1–glutamate 23 form a disordered region. Glycine 2 carries N-myristoyl glycine lipidation. Residues cysteine 37 and cysteine 40 each coordinate Zn(2+). The RING-type zinc finger occupies cysteine 37–arginine 76. Positions valine 43–histidine 45 are interaction with the C2HC RNF-type zinc finger. Zn(2+)-binding residues include cysteine 52, histidine 54, cysteine 57, cysteine 60, cysteine 72, cysteine 75, cysteine 100, and cysteine 103. The segment at cysteine 100–cysteine 119 adopts a C2HC RNF-type zinc-finger fold. Residues leucine 109–arginine 113 are interaction with the RING-type zinc finger. Positions 115 and 119 each coordinate Zn(2+). The linker region stretch occupies residues glutamine 120 to proline 128. The required for interaction with ubiquitin and for autoubiquitination stretch occupies residues glutamate 210 to glutamate 224.

In terms of assembly, interacts with UBE2D1. Interacts with VCP/p97; leading to recruit RNF125 to RIGI and promote ubiquitination of RIGI. Autoubiquitinated, leading to its subsequent proteasomal degradation. Predominantly expressed in lymphoid tissues, including bone marrow, spleen and thymus. Also weakly expressed in other tissues. Predominant in the CD4(+) and CD8(+) T-cells, suggesting that it is preferentially confined to T-cells.

The protein resides in the golgi apparatus membrane. It catalyses the reaction S-ubiquitinyl-[E2 ubiquitin-conjugating enzyme]-L-cysteine + [acceptor protein]-L-lysine = [E2 ubiquitin-conjugating enzyme]-L-cysteine + N(6)-ubiquitinyl-[acceptor protein]-L-lysine.. Its pathway is protein modification; protein ubiquitination. In terms of biological role, E3 ubiquitin-protein ligase that mediates ubiquitination and subsequent proteasomal degradation of target proteins, such as RIGI, MAVS/IPS1, IFIH1/MDA5, JAK1 and p53/TP53. Acts as a negative regulator of type I interferon production by mediating ubiquitination of RIGI at 'Lys-181', leading to RIGI degradation. Mediates ubiquitination and subsequent degradation of p53/TP53. Mediates ubiquitination and subsequent degradation of JAK1. Acts as a positive regulator of T-cell activation. This Homo sapiens (Human) protein is E3 ubiquitin-protein ligase RNF125.